Reading from the N-terminus, the 166-residue chain is Eukaryotic translation initiation factor 5A (166 aa).

The disordered stretch occupies residues 1-21 (MSDEDHDFSHQGGGDNASKTY). Lys53 is subject to Hypusine. The interval 101–121 (EDPSLPSHLSLMDDEGESRED) is disordered. Residues 112 to 121 (MDDEGESRED) are compositionally biased toward acidic residues.

It belongs to the eIF-5A family. In terms of processing, lys-53 undergoes hypusination, a unique post-translational modification that consists in the addition of a butylamino group from spermidine to lysine side chain, leading to the formation of the unusual amino acid hypusine. eIF-5As are the only known proteins to undergo this modification, which is essential for their function.

The protein localises to the cytoplasm. Functionally, translation factor that promotes translation elongation and termination, particularly upon ribosome stalling at specific amino acid sequence contexts. Binds between the exit (E) and peptidyl (P) site of the ribosome and promotes rescue of stalled ribosome: specifically required for efficient translation of polyproline-containing peptides as well as other motifs that stall the ribosome. Acts as a ribosome quality control (RQC) cofactor by joining the RQC complex to facilitate peptidyl transfer during CAT tailing step. This chain is Eukaryotic translation initiation factor 5A, found in Leishmania donovani.